A 196-amino-acid polypeptide reads, in one-letter code: Small heat shock protein C3 (196 aa).

A sHSP domain is found at 88–196 (SAYSSSAIRT…EKDAKEIPIQ (109 aa)).

Belongs to the small heat shock protein (HSP20) family.

This chain is Small heat shock protein C3 (hspc3-1), found in Rickettsia felis (strain ATCC VR-1525 / URRWXCal2) (Rickettsia azadi).